Reading from the N-terminus, the 315-residue chain is Ribosomal RNA small subunit methyltransferase H (315 aa).

S-adenosyl-L-methionine contacts are provided by residues 37 to 39 (GGH), aspartate 57, phenylalanine 83, aspartate 105, and glutamine 112. Residues 296 to 315 (EVKANPRSRSAVMRVAEKVR) form a disordered region.

This sequence belongs to the methyltransferase superfamily. RsmH family.

The protein resides in the cytoplasm. The enzyme catalyses cytidine(1402) in 16S rRNA + S-adenosyl-L-methionine = N(4)-methylcytidine(1402) in 16S rRNA + S-adenosyl-L-homocysteine + H(+). Specifically methylates the N4 position of cytidine in position 1402 (C1402) of 16S rRNA. This is Ribosomal RNA small subunit methyltransferase H from Stutzerimonas stutzeri (strain A1501) (Pseudomonas stutzeri).